Consider the following 316-residue polypeptide: Thymidylate synthase (316 aa).

Residues Arg-23 and Arg-178–Arg-179 contribute to the dUMP site. Residue Cys-198 is the Nucleophile of the active site. DUMP-binding positions include Arg-218–Asp-221, Asn-229, and His-259–Tyr-261. Residue Asp-221 participates in (6R)-5,10-methylene-5,6,7,8-tetrahydrofolate binding. Ala-315 lines the (6R)-5,10-methylene-5,6,7,8-tetrahydrofolate pocket.

This sequence belongs to the thymidylate synthase family. Bacterial-type ThyA subfamily. Homodimer.

Its subcellular location is the cytoplasm. It carries out the reaction dUMP + (6R)-5,10-methylene-5,6,7,8-tetrahydrofolate = 7,8-dihydrofolate + dTMP. It participates in pyrimidine metabolism; dTTP biosynthesis. In terms of biological role, catalyzes the reductive methylation of 2'-deoxyuridine-5'-monophosphate (dUMP) to 2'-deoxythymidine-5'-monophosphate (dTMP) while utilizing 5,10-methylenetetrahydrofolate (mTHF) as the methyl donor and reductant in the reaction, yielding dihydrofolate (DHF) as a by-product. This enzymatic reaction provides an intracellular de novo source of dTMP, an essential precursor for DNA biosynthesis. In Lactiplantibacillus plantarum (strain ATCC BAA-793 / NCIMB 8826 / WCFS1) (Lactobacillus plantarum), this protein is Thymidylate synthase.